Consider the following 374-residue polypeptide: S-adenosylmethionine:tRNA ribosyltransferase-isomerase (374 aa).

Belongs to the QueA family. In terms of assembly, monomer.

It localises to the cytoplasm. The catalysed reaction is 7-aminomethyl-7-carbaguanosine(34) in tRNA + S-adenosyl-L-methionine = epoxyqueuosine(34) in tRNA + adenine + L-methionine + 2 H(+). The protein operates within tRNA modification; tRNA-queuosine biosynthesis. Its function is as follows. Transfers and isomerizes the ribose moiety from AdoMet to the 7-aminomethyl group of 7-deazaguanine (preQ1-tRNA) to give epoxyqueuosine (oQ-tRNA). This chain is S-adenosylmethionine:tRNA ribosyltransferase-isomerase, found in Prochlorococcus marinus (strain MIT 9301).